Here is a 310-residue protein sequence, read N- to C-terminus: Succinate dehydrogenase assembly factor 2, mitochondrial (310 aa).

The segment covering 35–48 (LKDGSDEASPEVKA) has biased composition (basic and acidic residues). Residues 35–67 (LKDGSDEASPEVKAHRANQANKAPNQFVPNTTS) are disordered. Residues 52-67 (NQANKAPNQFVPNTTS) are compositionally biased toward polar residues.

Belongs to the SDHAF2 family. As to quaternary structure, interacts with the flavoprotein subunit within the SDH catalytic dimer.

The protein localises to the mitochondrion matrix. In terms of biological role, plays an essential role in the assembly of succinate dehydrogenase (SDH), an enzyme complex (also referred to as respiratory complex II) that is a component of both the tricarboxylic acid (TCA) cycle and the mitochondrial electron transport chain, and which couples the oxidation of succinate to fumarate with the reduction of ubiquinone (coenzyme Q) to ubiquinol. Required for flavinylation (covalent attachment of FAD) of the flavoprotein subunit of the SDH catalytic dimer. The sequence is that of Succinate dehydrogenase assembly factor 2, mitochondrial from Penicillium rubens (strain ATCC 28089 / DSM 1075 / NRRL 1951 / Wisconsin 54-1255) (Penicillium chrysogenum).